Reading from the N-terminus, the 345-residue chain is Phosphoribosylformylglycinamidine cyclo-ligase (345 aa).

This sequence belongs to the AIR synthase family.

The protein resides in the cytoplasm. The catalysed reaction is 2-formamido-N(1)-(5-O-phospho-beta-D-ribosyl)acetamidine + ATP = 5-amino-1-(5-phospho-beta-D-ribosyl)imidazole + ADP + phosphate + H(+). Its pathway is purine metabolism; IMP biosynthesis via de novo pathway; 5-amino-1-(5-phospho-D-ribosyl)imidazole from N(2)-formyl-N(1)-(5-phospho-D-ribosyl)glycinamide: step 2/2. This is Phosphoribosylformylglycinamidine cyclo-ligase from Shewanella loihica (strain ATCC BAA-1088 / PV-4).